Reading from the N-terminus, the 95-residue chain is Aspartyl/glutamyl-tRNA(Asn/Gln) amidotransferase subunit C (95 aa).

Belongs to the GatC family. In terms of assembly, heterotrimer of A, B and C subunits.

The enzyme catalyses L-glutamyl-tRNA(Gln) + L-glutamine + ATP + H2O = L-glutaminyl-tRNA(Gln) + L-glutamate + ADP + phosphate + H(+). It carries out the reaction L-aspartyl-tRNA(Asn) + L-glutamine + ATP + H2O = L-asparaginyl-tRNA(Asn) + L-glutamate + ADP + phosphate + 2 H(+). Functionally, allows the formation of correctly charged Asn-tRNA(Asn) or Gln-tRNA(Gln) through the transamidation of misacylated Asp-tRNA(Asn) or Glu-tRNA(Gln) in organisms which lack either or both of asparaginyl-tRNA or glutaminyl-tRNA synthetases. The reaction takes place in the presence of glutamine and ATP through an activated phospho-Asp-tRNA(Asn) or phospho-Glu-tRNA(Gln). This chain is Aspartyl/glutamyl-tRNA(Asn/Gln) amidotransferase subunit C, found in Rhizobium leguminosarum bv. trifolii (strain WSM2304).